The following is a 285-amino-acid chain: ATP synthase gamma chain (285 aa).

The protein belongs to the ATPase gamma chain family. As to quaternary structure, F-type ATPases have 2 components, CF(1) - the catalytic core - and CF(0) - the membrane proton channel. CF(1) has five subunits: alpha(3), beta(3), gamma(1), delta(1), epsilon(1). CF(0) has three main subunits: a, b and c.

Its subcellular location is the cell membrane. Its function is as follows. Produces ATP from ADP in the presence of a proton gradient across the membrane. The gamma chain is believed to be important in regulating ATPase activity and the flow of protons through the CF(0) complex. The protein is ATP synthase gamma chain of Lysinibacillus sphaericus (strain C3-41).